The primary structure comprises 506 residues: Maturase K (506 aa).

The protein belongs to the intron maturase 2 family. MatK subfamily.

It localises to the plastid. The protein localises to the chloroplast. Usually encoded in the trnK tRNA gene intron. Probably assists in splicing its own and other chloroplast group II introns. The sequence is that of Maturase K from Arabis alpina (Alpine rock-cress).